A 317-amino-acid polypeptide reads, in one-letter code: DNA-directed RNA polymerase subunit alpha (317 aa).

The interval methionine 1–alanine 234 is alpha N-terminal domain (alpha-NTD). Residues glutamate 249–asparagine 317 form an alpha C-terminal domain (alpha-CTD) region.

The protein belongs to the RNA polymerase alpha chain family. In terms of assembly, homodimer. The RNAP catalytic core consists of 2 alpha, 1 beta, 1 beta' and 1 omega subunit. When a sigma factor is associated with the core the holoenzyme is formed, which can initiate transcription.

It catalyses the reaction RNA(n) + a ribonucleoside 5'-triphosphate = RNA(n+1) + diphosphate. DNA-dependent RNA polymerase catalyzes the transcription of DNA into RNA using the four ribonucleoside triphosphates as substrates. This Mesoplasma florum (strain ATCC 33453 / NBRC 100688 / NCTC 11704 / L1) (Acholeplasma florum) protein is DNA-directed RNA polymerase subunit alpha.